Consider the following 384-residue polypeptide: PqqA peptide cyclase (384 aa).

One can recognise a Radical SAM core domain in the interval 14–226 (IPAPVGLLAE…IRIVEAARER (213 aa)). [4Fe-4S] cluster contacts are provided by C28, C32, and C35.

This sequence belongs to the radical SAM superfamily. PqqE family. Interacts with PqqD. The interaction is necessary for activity of PqqE. [4Fe-4S] cluster is required as a cofactor.

The catalysed reaction is [PQQ precursor protein] + S-adenosyl-L-methionine = E-Y cross-linked-[PQQ precursor protein] + 5'-deoxyadenosine + L-methionine + H(+). It functions in the pathway cofactor biosynthesis; pyrroloquinoline quinone biosynthesis. Its function is as follows. Catalyzes the cross-linking of a glutamate residue and a tyrosine residue in the PqqA protein as part of the biosynthesis of pyrroloquinoline quinone (PQQ). The polypeptide is PqqA peptide cyclase (Methylorubrum populi (strain ATCC BAA-705 / NCIMB 13946 / BJ001) (Methylobacterium populi)).